The chain runs to 661 residues: Kyphoscoliosis peptidase (661 aa).

Residues 116 to 137 (GDKNGNMRPRQPGGKDAHAYPW) form a disordered region. Active-site residues include cysteine 225, histidine 267, and aspartate 282.

It belongs to the transglutaminase-like superfamily. As to quaternary structure, interacts with IGFN1 and FLNC. Specifically expressed in skeletal and cardiac muscle.

It localises to the cytoplasm. The protein resides in the cytoskeleton. It is found in the myofibril. Its subcellular location is the sarcomere. The protein localises to the z line. Probable cytoskeleton-associated protease required for normal muscle growth. Involved in function, maturation and stabilization of the neuromuscular junction. May act by cleaving muscle-specific proteins such as FLNC. The polypeptide is Kyphoscoliosis peptidase (Mus musculus (Mouse)).